Reading from the N-terminus, the 301-residue chain is Leucine-rich repeat-containing protein 30 (301 aa).

9 LRR repeats span residues 72–93 (EVQK…VGKL), 95–116 (RIVV…VSLL), 118–139 (CLKV…LSLC), 141–163 (KLEV…ADLS), 164–185 (RLRK…VFSL), 187–208 (ELIF…IQHL), 210–231 (SLQI…LCLV), 233–254 (SLEL…LHLL), and 265–287 (MDKG…VEGG).

The sequence is that of Leucine-rich repeat-containing protein 30 (LRRC30) from Homo sapiens (Human).